A 338-amino-acid polypeptide reads, in one-letter code: Glycerol-1-phosphate dehydrogenase [NAD(P)+] (338 aa).

NAD(+) is bound by residues 81-85 (GRPLD) and 103-106 (TSAS). Asp-108 is a substrate binding site. Ser-112 lines the NAD(+) pocket. Asp-157 lines the substrate pocket. Residues Asp-157 and His-238 each coordinate Zn(2+). Substrate is bound at residue His-242. His-256 is a binding site for Zn(2+).

The protein belongs to the glycerol-1-phosphate dehydrogenase family. As to quaternary structure, homodimer. It depends on Zn(2+) as a cofactor.

It is found in the cytoplasm. It catalyses the reaction sn-glycerol 1-phosphate + NAD(+) = dihydroxyacetone phosphate + NADH + H(+). It carries out the reaction sn-glycerol 1-phosphate + NADP(+) = dihydroxyacetone phosphate + NADPH + H(+). Its pathway is membrane lipid metabolism; glycerophospholipid metabolism. Catalyzes the NAD(P)H-dependent reduction of dihydroxyacetonephosphate (DHAP or glycerone phosphate) to glycerol 1-phosphate (G1P). The G1P thus generated is used as the glycerophosphate backbone of phospholipids in the cellular membranes of Archaea. The polypeptide is Glycerol-1-phosphate dehydrogenase [NAD(P)+] (Pyrobaculum calidifontis (strain DSM 21063 / JCM 11548 / VA1)).